A 226-amino-acid polypeptide reads, in one-letter code: RLA class II histocompatibility antigen, DP alpha-1 chain (226 aa).

The Extracellular portion of the chain corresponds to 1 to 189 (EHVSVFVIFA…PIQMPETTET (189 aa)). 2 N-linked (GlcNAc...) asparagine glycosylation sites follow: Asn75 and Asn115. The 93-residue stretch at 84–176 (PEVIVFPKEP…LDAPLLTHWE (93 aa)) folds into the Ig-like C1-type domain. Cysteines 104 and 160 form a disulfide. Residues 190–210 (VVCALGLVVGLAGVVVGIVLI) form a helical membrane-spanning segment. At 211 to 226 (TKALRSSPDPRARRPL) the chain is on the cytoplasmic side.

Belongs to the MHC class II family.

The protein localises to the membrane. The protein is RLA class II histocompatibility antigen, DP alpha-1 chain of Oryctolagus cuniculus (Rabbit).